The sequence spans 125 residues: uncharacterized protein (125 aa).

2 helical membrane-spanning segments follow: residues 28–48 and 54–74; these read VFITHLFFLLHSLLLFLSQFC and FFLPTINLVTHSIKFITLFFF.

The protein localises to the membrane. This is an uncharacterized protein from Saccharomyces cerevisiae (strain ATCC 204508 / S288c) (Baker's yeast).